A 325-amino-acid polypeptide reads, in one-letter code: Alkanal monooxygenase beta chain (325 aa).

This sequence belongs to the bacterial luciferase oxidoreductase family. As to quaternary structure, heterodimer of an alpha and a beta chain.

It catalyses the reaction a long-chain fatty aldehyde + FMNH2 + O2 = a long-chain fatty acid + hnu + FMN + H2O + 2 H(+). Functionally, light-emitting reaction in luminous bacteria. The specific role of the beta subunit is unknown, but it is absolutely required for bioluminescence activity. The chain is Alkanal monooxygenase beta chain (luxB) from Photobacterium leiognathi.